Here is a 462-residue protein sequence, read N- to C-terminus: MTKELLRALPKIDEILGIFNEDFLNENGRETIVSALRDIINENRKAILNEEVDYALTKEEAKSKCEHRLLKKRERNLKRVINGTGVVIHTNLGRSLLSKEATEAVALAASSYSNLEYDLEKGERGSRYSLIEGIIKDITGAEAALVVNNNAAAIMLVLNSLCENKEVIVSRGELVEIGGSFRIPEVMNFSRAKLVEVGTTNRTHLYDYEDAITEETGAFLKVHSSNFKIVGFTKSVSANDICNLAKEKGIPVIEDIGSGVLIDLSKYGLEKEPTVIESLESGVDIVTFSGDKMLGGAQAGIIVGKKKFIDKIKKNQLTRALRVDKFTLAALEITLKHYLNEKEAIEKIPTLYMMTLDLNEIKERANRLYKNLEGLNKFYKFSIEEGESTVGGGSMPDSKLSTYLLRIDSDRINEVNLERELREYKIPIITRVYKGAVYIDLRTILEDDYEVIFNALKEIGEK.

At Lys-292 the chain carries N6-(pyridoxal phosphate)lysine.

This sequence belongs to the SelA family. It depends on pyridoxal 5'-phosphate as a cofactor.

The protein localises to the cytoplasm. The catalysed reaction is L-seryl-tRNA(Sec) + selenophosphate + H(+) = L-selenocysteinyl-tRNA(Sec) + phosphate. It participates in aminoacyl-tRNA biosynthesis; selenocysteinyl-tRNA(Sec) biosynthesis; selenocysteinyl-tRNA(Sec) from L-seryl-tRNA(Sec) (bacterial route): step 1/1. Functionally, converts seryl-tRNA(Sec) to selenocysteinyl-tRNA(Sec) required for selenoprotein biosynthesis. The chain is L-seryl-tRNA(Sec) selenium transferase from Clostridium perfringens (strain 13 / Type A).